Here is a 423-residue protein sequence, read N- to C-terminus: MLSFVKKSIALVAALQAVTALATPISSEAGVEKRGSGFANAVYFTNWGIYGRNFQPADLPASEITHVLYSFMNVRADGTIFSGDTYADYEKHYAGDSWNDVGTNAYGCVKQLYLLKKQNRNMKVMLSIGGWTWSTNFPAAASSAATRKTFAQSAVGFMKDWGFDGIDIDWEYPADATQAQNMVLLLQAVRSELDSYAAQYAKGHHFLLSIAAPAGPDNYNKLKFAELGKVLDYINLMAYDYAGSWSNYTGHDANIYANPQNPNATPYNTDDAVQAYINGGVPANKIVLGMPIYGRSFQQTEGIGKPYNGIGSGSWENGIWDYKALPKAGATVKCDDTAKGCYSYDPSTKELISFDTPAMISTKVSWLKGKGLGGTMFWEASASKKGSDSLISTSHQGLGSQDSTQNYLDYPNSKYDNIKKGMN.

An N-terminal signal peptide occupies residues 1–22; sequence MLSFVKKSIALVAALQAVTALA. Positions 23–34 are excised as a propeptide; that stretch reads TPISSEAGVEKR. Residues 38 to 401 form the GH18 domain; that stretch reads FANAVYFTNW…STSHQGLGSQ (364 aa). Chitin contacts are provided by residues 102–103 and 129–132; these read GT and GGWT. Catalysis depends on Glu-171, which acts as the Proton donor. Chitin-binding positions include Tyr-172, 237–240, and Trp-378; that span reads MAYD.

Belongs to the glycosyl hydrolase 18 family. Chitinase class V subfamily.

The protein localises to the secreted. It carries out the reaction Random endo-hydrolysis of N-acetyl-beta-D-glucosaminide (1-&gt;4)-beta-linkages in chitin and chitodextrins.. The sequence is that of Chitinase 1 (CHI1) from Aphanocladium album (Wheat rust fungus).